The chain runs to 203 residues: Guanylate kinase (203 aa).

The region spanning Gly-3 to Thr-181 is the Guanylate kinase-like domain. Ala-10 to Thr-17 lines the ATP pocket.

It belongs to the guanylate kinase family.

Its subcellular location is the cytoplasm. It carries out the reaction GMP + ATP = GDP + ADP. In terms of biological role, essential for recycling GMP and indirectly, cGMP. In Alkalilimnicola ehrlichii (strain ATCC BAA-1101 / DSM 17681 / MLHE-1), this protein is Guanylate kinase.